Consider the following 299-residue polypeptide: Apolipoprotein E (299 aa).

Residues 1 to 18 (MKVLCTVLVVTLLAGCQA) form the signal peptide. Residues 74-245 (VLMEDTMKAV…RLEEVREQME (172 aa)) are 8 X 22 AA approximate tandem repeats. 8 consecutive repeat copies span residues 75 to 95 (LMED…QELV), 96 to 117 (PMAE…ARLG), 118 to 139 (ADME…AMLG), 140 to 161 (QSAE…KKLL), 162 to 183 (RDAE…EGAE), 184 to 206 (RSVS…RAAL), 207 to 225 (TSQP…LRGR), and 224 to 242 (GRLE…EVRE). M137 carries the methionine sulfoxide modification. Phosphoserine is present on S141. An LDL and other lipoprotein receptors binding region spans residues 152 to 162 (HLRKLRKKLLR). 156 to 159 (LRKK) is a binding site for heparin. Residues 205–273 (ALTSQPLQER…GWFEPMVEDM (69 aa)) are lipid-binding and lipoprotein association. 219-226 (GKRLRGRL) lines the heparin pocket. Residues 261 to 273 (RLKGWFEPMVEDM) form a specificity for association with VLDL region.

Belongs to the apolipoprotein A1/A4/E family. In terms of assembly, homotetramer. May interact with ABCA1; functionally associated with ABCA1 in the biogenesis of HDLs. May interact with APP/A4 amyloid-beta peptide; the interaction is extremely stable in vitro but its physiological significance is unclear. May interact with MAPT. May interact with MAP2. In the cerebrospinal fluid, interacts with secreted SORL1. Interacts with PMEL; this allows the loading of PMEL luminal fragment on ILVs to induce fibril nucleation. APOE exists as multiple glycosylated and sialylated glycoforms within cells and in plasma. The extent of glycosylation and sialylation are tissue and context specific. Post-translationally, glycated in plasma VLDL. In terms of processing, phosphorylated by FAM20C in the extracellular medium.

The protein resides in the secreted. Its subcellular location is the extracellular space. It is found in the extracellular matrix. It localises to the extracellular vesicle. The protein localises to the endosome. The protein resides in the multivesicular body. In terms of biological role, APOE is an apolipoprotein, a protein associating with lipid particles, that mainly functions in lipoprotein-mediated lipid transport between organs via the plasma and interstitial fluids. APOE is a core component of plasma lipoproteins and is involved in their production, conversion and clearance. Apolipoproteins are amphipathic molecules that interact both with lipids of the lipoprotein particle core and the aqueous environment of the plasma. As such, APOE associates with chylomicrons, chylomicron remnants, very low density lipoproteins (VLDL) and intermediate density lipoproteins (IDL) but shows a preferential binding to high-density lipoproteins (HDL). It also binds a wide range of cellular receptors including the LDL receptor/LDLR, the LDL receptor-related proteins LRP1, LRP2 and LRP8 and the very low-density lipoprotein receptor/VLDLR that mediate the cellular uptake of the APOE-containing lipoprotein particles. Finally, APOE also has a heparin-binding activity and binds heparan-sulfate proteoglycans on the surface of cells, a property that supports the capture and the receptor-mediated uptake of APOE-containing lipoproteins by cells. A main function of APOE is to mediate lipoprotein clearance through the uptake of chylomicrons, VLDLs, and HDLs by hepatocytes. APOE is also involved in the biosynthesis by the liver of VLDLs as well as their uptake by peripheral tissues ensuring the delivery of triglycerides and energy storage in muscle, heart and adipose tissues. By participating in the lipoprotein-mediated distribution of lipids among tissues, APOE plays a critical role in plasma and tissues lipid homeostasis. APOE is also involved in two steps of reverse cholesterol transport, the HDLs-mediated transport of cholesterol from peripheral tissues to the liver, and thereby plays an important role in cholesterol homeostasis. First, it is functionally associated with ABCA1 in the biogenesis of HDLs in tissues. Second, it is enriched in circulating HDLs and mediates their uptake by hepatocytes. APOE also plays an important role in lipid transport in the central nervous system, regulating neuron survival and sprouting. The polypeptide is Apolipoprotein E (APOE) (Ctenomys sociabilis (Social tuco-tuco)).